Here is a 413-residue protein sequence, read N- to C-terminus: Serine hydroxymethyltransferase (413 aa).

Residues Leu-117 and 121 to 123 (GHL) each bind (6S)-5,6,7,8-tetrahydrofolate. N6-(pyridoxal phosphate)lysine is present on Lys-226. Residues Glu-239 and 349–351 (SPF) each bind (6S)-5,6,7,8-tetrahydrofolate.

This sequence belongs to the SHMT family. As to quaternary structure, homodimer. Pyridoxal 5'-phosphate is required as a cofactor.

It is found in the cytoplasm. The enzyme catalyses (6R)-5,10-methylene-5,6,7,8-tetrahydrofolate + glycine + H2O = (6S)-5,6,7,8-tetrahydrofolate + L-serine. It functions in the pathway one-carbon metabolism; tetrahydrofolate interconversion. Its pathway is amino-acid biosynthesis; glycine biosynthesis; glycine from L-serine: step 1/1. In terms of biological role, catalyzes the reversible interconversion of serine and glycine with tetrahydrofolate (THF) serving as the one-carbon carrier. This reaction serves as the major source of one-carbon groups required for the biosynthesis of purines, thymidylate, methionine, and other important biomolecules. Also exhibits THF-independent aldolase activity toward beta-hydroxyamino acids, producing glycine and aldehydes, via a retro-aldol mechanism. The polypeptide is Serine hydroxymethyltransferase (Bacillus mycoides (strain KBAB4) (Bacillus weihenstephanensis)).